Reading from the N-terminus, the 139-residue chain is MTERTFSIIKPDATRRNLTGKVNAVIEDAGLRIVAQKRIRMSRAQAEKFYEVHKERPFFGELVEFMTSAPVVVQVLEGENAVARYREVMGATNPAQAADGTIRKLYAESVGENSVHGSDSLENAKIEIAQFFTEDEIVG.

Positions 10, 58, 86, 92, 103, and 113 each coordinate ATP. His-116 serves as the catalytic Pros-phosphohistidine intermediate.

It belongs to the NDK family. As to quaternary structure, homotetramer. It depends on Mg(2+) as a cofactor.

It localises to the cytoplasm. The enzyme catalyses a 2'-deoxyribonucleoside 5'-diphosphate + ATP = a 2'-deoxyribonucleoside 5'-triphosphate + ADP. It catalyses the reaction a ribonucleoside 5'-diphosphate + ATP = a ribonucleoside 5'-triphosphate + ADP. In terms of biological role, major role in the synthesis of nucleoside triphosphates other than ATP. The ATP gamma phosphate is transferred to the NDP beta phosphate via a ping-pong mechanism, using a phosphorylated active-site intermediate. This chain is Nucleoside diphosphate kinase, found in Phenylobacterium zucineum (strain HLK1).